The primary structure comprises 306 residues: Metal ABC transporter substrate-binding lipoprotein SloC (306 aa).

The signal sequence occupies residues 1 to 19 (MKKLSLLLLVCLSLLGLFA). Residue cysteine 20 is the site of N-palmitoyl cysteine attachment. A lipid anchor (S-diacylglycerol cysteine) is attached at cysteine 20. A divalent metal cation contacts are provided by histidine 64, histidine 136, glutamate 202, and aspartate 277.

Belongs to the bacterial solute-binding protein 9 family. Lipoprotein receptor antigen (Lrai) subfamily.

It localises to the cell membrane. Functionally, part of the ATP-binding cassette (ABC) transport system SloABC involved in metal import. Binds a metal with high affinity and specificity and delivers it to the membrane permease for translocation into the cytoplasm. May act as an adhesin which is involved on adherence to extracellular matrix. It is an important factor in pathogenesis and infection. May contribute to the formation and accumulation of dental plaque. The polypeptide is Metal ABC transporter substrate-binding lipoprotein SloC (sloC) (Streptococcus mutans serotype c (strain ATCC 700610 / UA159)).